The sequence spans 288 residues: 5,10-methylenetetrahydrofolate reductase (288 aa).

Residues alanine 51, histidine 73, glycine 106, aspartate 107, alanine 118, tyrosine 140, histidine 144, and lysine 159 each coordinate FAD. Aspartate 107 is a binding site for (6S)-5-methyl-5,6,7,8-tetrahydrofolate. Glutamine 175 is a (6S)-5-methyl-5,6,7,8-tetrahydrofolate binding site. Residue glutamine 175 coordinates NADH.

It belongs to the methylenetetrahydrofolate reductase family. FAD serves as cofactor.

The catalysed reaction is (6S)-5-methyl-5,6,7,8-tetrahydrofolate + NAD(+) = (6R)-5,10-methylene-5,6,7,8-tetrahydrofolate + NADH + H(+). It participates in one-carbon metabolism; tetrahydrofolate interconversion. Its pathway is amino-acid biosynthesis; L-methionine biosynthesis via de novo pathway. In terms of biological role, catalyzes the NADH-dependent reduction of 5,10-methylenetetrahydrofolate to 5-methyltetrahydrofolate. Is required to provide the methyl group necessary for methionine synthetase to convert homocysteine to methionine; the methyl group is given by 5-methyltetrahydrofolate. Is required for Sphingobium SYK-6 to grow on vanillate or syringate as the sole source of carbon. The protein is 5,10-methylenetetrahydrofolate reductase of Sphingobium sp. (strain NBRC 103272 / SYK-6).